The chain runs to 514 residues: Glutamate--cysteine ligase (514 aa).

It belongs to the glutamate--cysteine ligase type 1 family. Type 1 subfamily.

It catalyses the reaction L-cysteine + L-glutamate + ATP = gamma-L-glutamyl-L-cysteine + ADP + phosphate + H(+). It participates in sulfur metabolism; glutathione biosynthesis; glutathione from L-cysteine and L-glutamate: step 1/2. The protein is Glutamate--cysteine ligase of Enterobacter sp. (strain 638).